We begin with the raw amino-acid sequence, 658 residues long: Carnitine O-palmitoyltransferase 2, mitochondrial (658 aa).

The N-terminal 26 residues, M1–Y26, are a transit peptide targeting the mitochondrion. Topologically, residues S27 to L179 are mitochondrial matrix. Residues N180–N209 constitute an intramembrane region (note=Mitochondrial inner membrane). Over A210–K658 the chain is Mitochondrial matrix. H373 acts as the Proton acceptor in catalysis. G453–D465 is a binding site for CoA. Residues Y487, S489, and T500 each coordinate (R)-carnitine.

This sequence belongs to the carnitine/choline acetyltransferase family.

It localises to the mitochondrion inner membrane. The catalysed reaction is (R)-carnitine + hexadecanoyl-CoA = O-hexadecanoyl-(R)-carnitine + CoA. The enzyme catalyses octanoyl-CoA + (R)-carnitine = O-octanoyl-(R)-carnitine + CoA. It catalyses the reaction decanoyl-CoA + (R)-carnitine = O-decanoyl-(R)-carnitine + CoA. It carries out the reaction dodecanoyl-CoA + (R)-carnitine = O-dodecanoyl-R-carnitine + CoA. The catalysed reaction is tetradecanoyl-CoA + (R)-carnitine = O-tetradecanoyl-(R)-carnitine + CoA. The enzyme catalyses (R)-carnitine + octadecanoyl-CoA = O-octadecanoyl-(R)-carnitine + CoA. It catalyses the reaction eicosanoyl-CoA + (R)-carnitine = O-eicosanoyl-(R)-carnitine + CoA. It carries out the reaction (9Z)-tetradecenoyl-CoA + (R)-carnitine = O-(9Z)-tetradecenoyl-(R)-carnitine + CoA. The catalysed reaction is (5Z)-tetradecenoyl-CoA + (R)-carnitine = O-(5Z)-tetradecenoyl-(R)-carnitine + CoA. The enzyme catalyses (R)-carnitine + (9Z)-octadecenoyl-CoA = O-(9Z)-octadecenoyl-(R)-carnitine + CoA. It catalyses the reaction 4,8-dimethylnonanoyl-CoA + (R)-carnitine = O-4,8-dimethylnonanoyl-(R)-carnitine + CoA. Its pathway is lipid metabolism; fatty acid beta-oxidation. In terms of biological role, involved in the intramitochondrial synthesis of acylcarnitines from accumulated acyl-CoA metabolites. Reconverts acylcarnitines back into the respective acyl-CoA esters that can then undergo beta-oxidation, an essential step for the mitochondrial uptake of long-chain fatty acids and their subsequent beta-oxidation in the mitochondrion. Active with medium (C8-C12) and long-chain (C14-C18) acyl-CoA esters. The chain is Carnitine O-palmitoyltransferase 2, mitochondrial (cpt2) from Xenopus tropicalis (Western clawed frog).